We begin with the raw amino-acid sequence, 567 residues long: MKQSKVFIPTMRDVPSEAEAQSHRLLLKAGLIKQSTSGIYSYLPLATRVLNNITAIVRQEMERIDSVEILMPALQQAELWEESGRWGAYGPELMRLQDRHGRQFALGPTHEELVTSIVRNELKSYKQLPMTLFQIQSKFRDEKRPRFGLLRGREFIMKDAYSFHADEASLDQTYQDMYQAYSRIFERVGINARPVVADSGAIGGSHTHEFMALSAIGEDTIVYSKESDYAANIEKAEVVYEPNHKHTTVQPIEKIETPNVKTAQELADFLGRPVDEIVKTMIFKVDGEYIMVLVRGHHEINDIKLKSYFGTDNIELATQDEIVNLVGANPGSLGPVIDKEIKIYADNFVQDLNNLVVGANEDGYHLINVNVGRDFNVDEYGDFRFILEGEKLSDGSGVAHFAEGIEVGQVFKLGTKYSESMNATFLDNQGKAQPLIMGCYGIGISRTLSAIVEQNHDDNGIVWPKSVTPFDLHLISINPKKDDQRELADALYAEFNTKFDVLYDDRQERAGVKFNDADLIGLPLRIVVGKRASEGIVEVKERLTGDSEEVHIDDLMTVITNKYDNLK.

The protein belongs to the class-II aminoacyl-tRNA synthetase family. ProS type 1 subfamily. Homodimer.

Its subcellular location is the cytoplasm. It catalyses the reaction tRNA(Pro) + L-proline + ATP = L-prolyl-tRNA(Pro) + AMP + diphosphate. Functionally, catalyzes the attachment of proline to tRNA(Pro) in a two-step reaction: proline is first activated by ATP to form Pro-AMP and then transferred to the acceptor end of tRNA(Pro). As ProRS can inadvertently accommodate and process non-cognate amino acids such as alanine and cysteine, to avoid such errors it has two additional distinct editing activities against alanine. One activity is designated as 'pretransfer' editing and involves the tRNA(Pro)-independent hydrolysis of activated Ala-AMP. The other activity is designated 'posttransfer' editing and involves deacylation of mischarged Ala-tRNA(Pro). The misacylated Cys-tRNA(Pro) is not edited by ProRS. This is Proline--tRNA ligase from Staphylococcus aureus (strain MRSA252).